The following is a 231-amino-acid chain: Lipoprotein-releasing system ATP-binding protein LolD (231 aa).

Residues 11–231 (LRLEGLTRRF…TLRDGKLVPF (221 aa)) enclose the ABC transporter domain. ATP is bound at residue 47 to 54 (APSGTGKS).

The protein belongs to the ABC transporter superfamily. Lipoprotein translocase (TC 3.A.1.125) family. In terms of assembly, the complex is composed of two ATP-binding proteins (LolD) and two transmembrane proteins (LolC and LolE).

Its subcellular location is the cell inner membrane. Functionally, part of the ABC transporter complex LolCDE involved in the translocation of mature outer membrane-directed lipoproteins, from the inner membrane to the periplasmic chaperone, LolA. Responsible for the formation of the LolA-lipoprotein complex in an ATP-dependent manner. The sequence is that of Lipoprotein-releasing system ATP-binding protein LolD from Gluconobacter oxydans (strain 621H) (Gluconobacter suboxydans).